Consider the following 343-residue polypeptide: Anthranilate phosphoribosyltransferase (343 aa).

Residues G84, 87-88, T92, 94-97, 112-120, and S124 contribute to the 5-phospho-alpha-D-ribose 1-diphosphate site; these read GD, NIST, and KHGNRGVSS. G84 serves as a coordination point for anthranilate. S96 lines the Mg(2+) pocket. Position 115 (N115) interacts with anthranilate. An anthranilate-binding site is contributed by R170. Positions 229 and 230 each coordinate Mg(2+).

This sequence belongs to the anthranilate phosphoribosyltransferase family. In terms of assembly, homodimer. Requires Mg(2+) as cofactor.

It catalyses the reaction N-(5-phospho-beta-D-ribosyl)anthranilate + diphosphate = 5-phospho-alpha-D-ribose 1-diphosphate + anthranilate. It functions in the pathway amino-acid biosynthesis; L-tryptophan biosynthesis; L-tryptophan from chorismate: step 2/5. Functionally, catalyzes the transfer of the phosphoribosyl group of 5-phosphorylribose-1-pyrophosphate (PRPP) to anthranilate to yield N-(5'-phosphoribosyl)-anthranilate (PRA). The polypeptide is Anthranilate phosphoribosyltransferase (Burkholderia thailandensis (strain ATCC 700388 / DSM 13276 / CCUG 48851 / CIP 106301 / E264)).